The primary structure comprises 380 residues: Chaperone protein DnaJ (380 aa).

Residues D5–G69 enclose the J domain. The CR-type zinc-finger motif lies at G135–R217. Zn(2+) is bound by residues C148, C151, C165, C168, C191, C194, C205, and C208. CXXCXGXG motif repeat units follow at residues C148–G155, C165–G172, C191–G198, and C205–G212.

Belongs to the DnaJ family. In terms of assembly, homodimer. Zn(2+) is required as a cofactor.

The protein localises to the cytoplasm. Functionally, participates actively in the response to hyperosmotic and heat shock by preventing the aggregation of stress-denatured proteins and by disaggregating proteins, also in an autonomous, DnaK-independent fashion. Unfolded proteins bind initially to DnaJ; upon interaction with the DnaJ-bound protein, DnaK hydrolyzes its bound ATP, resulting in the formation of a stable complex. GrpE releases ADP from DnaK; ATP binding to DnaK triggers the release of the substrate protein, thus completing the reaction cycle. Several rounds of ATP-dependent interactions between DnaJ, DnaK and GrpE are required for fully efficient folding. Also involved, together with DnaK and GrpE, in the DNA replication of plasmids through activation of initiation proteins. The chain is Chaperone protein DnaJ from Parageobacillus thermoglucosidasius (Geobacillus thermoglucosidasius).